Reading from the N-terminus, the 238-residue chain is ATP synthase subunit a (238 aa).

The next 7 membrane-spanning stretches (helical) occupy residues 35-55 (SNVIYAWFAMVLLIILGTLAT), 61-81 (VPSGLQNFFEVVVGGLESFVV), 94-114 (FLCALFLFIITGNLIGLVPGL), 128-148 (ALTVFAYYNFWGIRMWGAGYI), 151-171 (FMGPFWWLVPLMLPIEIISHL), 190-210 (IVLVLLFALAPVVGTFPMYFL), and 211-231 (FSLADCIQAFVFFMLAMIYLK).

This sequence belongs to the ATPase A chain family. F-type ATPases have 2 components, CF(1) - the catalytic core - and CF(0) - the membrane proton channel. CF(1) has five subunits: alpha(3), beta(3), gamma(1), delta(1), epsilon(1). CF(0) has three main subunits: a(1), b(2) and c(9-12). The alpha and beta chains form an alternating ring which encloses part of the gamma chain. CF(1) is attached to CF(0) by a central stalk formed by the gamma and epsilon chains, while a peripheral stalk is formed by the delta and b chains.

It is found in the cell inner membrane. In terms of biological role, key component of the proton channel; it plays a direct role in the translocation of protons across the membrane. The sequence is that of ATP synthase subunit a from Solidesulfovibrio magneticus (strain ATCC 700980 / DSM 13731 / RS-1) (Desulfovibrio magneticus).